A 329-amino-acid polypeptide reads, in one-letter code: 4-hydroxythreonine-4-phosphate dehydrogenase (329 aa).

Substrate is bound by residues His136 and Thr137. Residues His166, His211, and His266 each contribute to the a divalent metal cation site. Lys274, Asn283, and Arg292 together coordinate substrate.

The protein belongs to the PdxA family. Homodimer. Zn(2+) serves as cofactor. The cofactor is Mg(2+). Requires Co(2+) as cofactor.

The protein resides in the cytoplasm. The enzyme catalyses 4-(phosphooxy)-L-threonine + NAD(+) = 3-amino-2-oxopropyl phosphate + CO2 + NADH. The protein operates within cofactor biosynthesis; pyridoxine 5'-phosphate biosynthesis; pyridoxine 5'-phosphate from D-erythrose 4-phosphate: step 4/5. In terms of biological role, catalyzes the NAD(P)-dependent oxidation of 4-(phosphooxy)-L-threonine (HTP) into 2-amino-3-oxo-4-(phosphooxy)butyric acid which spontaneously decarboxylates to form 3-amino-2-oxopropyl phosphate (AHAP). This is 4-hydroxythreonine-4-phosphate dehydrogenase from Salmonella typhimurium (strain LT2 / SGSC1412 / ATCC 700720).